Reading from the N-terminus, the 63-residue chain is Large ribosomal subunit protein uL29 (63 aa).

Belongs to the universal ribosomal protein uL29 family.

In Shigella dysenteriae serotype 1 (strain Sd197), this protein is Large ribosomal subunit protein uL29.